A 421-amino-acid polypeptide reads, in one-letter code: SH2 domain-containing protein 4A (421 aa).

Residues Ser117 and Ser123 each carry the phosphoserine modification. Residues 132–271 form a disordered region; it reads DLQAMKKTEP…FLQPLGIPPK (140 aa). 2 stretches are compositionally biased toward basic and acidic residues: residues 163–201 and 211–230; these read TRKD…KEDS and KAAD…DYKR. Position 232 is a phosphoserine (Ser232). The SH2 domain maps to 315 to 407; it reads WFHGILTLKK…LGKELLLYPC (93 aa).

As to quaternary structure, interacts with ESR1. In the kidney, expressed only in the glomerulus. Expressed in T-cells, B-cells, macrophages and dendritic cells (at protein level). In adult, highest levels are found in muscle and lung with lower levels in kidney.

The protein resides in the cytoplasm. In terms of biological role, inhibits estrogen-induced cell proliferation by competing with PLCG for binding to ESR1, blocking the effect of estrogen on PLCG and repressing estrogen-induced proliferation. May play a role in T-cell development and function. In Mus musculus (Mouse), this protein is SH2 domain-containing protein 4A (Sh2d4a).